The sequence spans 113 residues: Large ribosomal subunit protein bL17 (113 aa).

It belongs to the bacterial ribosomal protein bL17 family. In terms of assembly, part of the 50S ribosomal subunit. Contacts protein L32.

The sequence is that of Large ribosomal subunit protein bL17 from Caldicellulosiruptor bescii (strain ATCC BAA-1888 / DSM 6725 / KCTC 15123 / Z-1320) (Anaerocellum thermophilum).